Here is a 142-residue protein sequence, read N- to C-terminus: Large ribosomal subunit protein uL13 (142 aa).

Belongs to the universal ribosomal protein uL13 family. As to quaternary structure, part of the 50S ribosomal subunit.

Its function is as follows. This protein is one of the early assembly proteins of the 50S ribosomal subunit, although it is not seen to bind rRNA by itself. It is important during the early stages of 50S assembly. This chain is Large ribosomal subunit protein uL13, found in Hahella chejuensis (strain KCTC 2396).